Reading from the N-terminus, the 69-residue chain is Peptide Hact-1 (69 aa).

Positions 1-21 are cleaved as a signal peptide; sequence MDRKFHLCLLLVILGTIIVQG. A propeptide spanning residues 22-57 is cleaved from the precursor; that stretch reads APLENENDADPDKPQKYRYYLKRATTEKKDNDPAKP. Cys59 and Cys68 are joined by a disulfide.

In terms of tissue distribution, tentacle (ecto and/or endoderm tissue), and possibly also nematoblasts.

Its subcellular location is the secreted. It localises to the nematocyst. In terms of biological role, peptide with unknown function. Has a limited effect on human peripheral blood mononuclear cells. Does not show activity against both Gram-positive and Gram-negative bacteria nor is it active on the 26 voltage-gated ion channels tested. This Heliofungia actiniformis (Mushroom coral) protein is Peptide Hact-1.